The primary structure comprises 240 residues: Uridylate kinase (240 aa).

Position 13 to 16 (Lys13 to Gly16) interacts with ATP. An involved in allosteric activation by GTP region spans residues Gly21–Gly26. A UMP-binding site is contributed by Gly55. ATP contacts are provided by Gly56 and Arg60. UMP-binding positions include Asp75 and Thr137–Thr144. The ATP site is built by Thr164, Tyr170, and Asp173.

Belongs to the UMP kinase family. Homohexamer.

It localises to the cytoplasm. The catalysed reaction is UMP + ATP = UDP + ADP. The protein operates within pyrimidine metabolism; CTP biosynthesis via de novo pathway; UDP from UMP (UMPK route): step 1/1. With respect to regulation, allosterically activated by GTP. Inhibited by UTP. Functionally, catalyzes the reversible phosphorylation of UMP to UDP. The polypeptide is Uridylate kinase (Aquifex aeolicus (strain VF5)).